We begin with the raw amino-acid sequence, 268 residues long: Diaminopimelate epimerase (268 aa).

3 residues coordinate substrate: N13, Q46, and N64. The Proton donor role is filled by C73. Residues G74–N75, N148, N181, and E199–R200 each bind substrate. The active-site Proton acceptor is C208. G209 to T210 is a binding site for substrate.

The protein belongs to the diaminopimelate epimerase family. As to quaternary structure, homodimer.

The protein resides in the cytoplasm. The catalysed reaction is (2S,6S)-2,6-diaminopimelate = meso-2,6-diaminopimelate. Its pathway is amino-acid biosynthesis; L-lysine biosynthesis via DAP pathway; DL-2,6-diaminopimelate from LL-2,6-diaminopimelate: step 1/1. Its function is as follows. Catalyzes the stereoinversion of LL-2,6-diaminopimelate (L,L-DAP) to meso-diaminopimelate (meso-DAP), a precursor of L-lysine and an essential component of the bacterial peptidoglycan. In Sphingopyxis alaskensis (strain DSM 13593 / LMG 18877 / RB2256) (Sphingomonas alaskensis), this protein is Diaminopimelate epimerase.